A 768-amino-acid polypeptide reads, in one-letter code: Phosphoribosylformylglycinamidine synthase subunit PurL (768 aa).

His53 is a catalytic residue. Tyr56 contacts ATP. Glu98 serves as a coordination point for Mg(2+). Substrate contacts are provided by residues 99 to 102 (SHNH) and Arg121. Catalysis depends on His100, which acts as the Proton acceptor. Asp122 serves as a coordination point for Mg(2+). A substrate-binding site is contributed by Gln253. Asp285 contributes to the Mg(2+) binding site. A substrate-binding site is contributed by 328–330 (ETQ). 2 residues coordinate ATP: Asp516 and Gly561. Asn562 is a binding site for Mg(2+). Ser564 contacts substrate.

This sequence belongs to the FGAMS family. In terms of assembly, monomer. Part of the FGAM synthase complex composed of 1 PurL, 1 PurQ and 2 PurS subunits.

The protein localises to the cytoplasm. The enzyme catalyses N(2)-formyl-N(1)-(5-phospho-beta-D-ribosyl)glycinamide + L-glutamine + ATP + H2O = 2-formamido-N(1)-(5-O-phospho-beta-D-ribosyl)acetamidine + L-glutamate + ADP + phosphate + H(+). It functions in the pathway purine metabolism; IMP biosynthesis via de novo pathway; 5-amino-1-(5-phospho-D-ribosyl)imidazole from N(2)-formyl-N(1)-(5-phospho-D-ribosyl)glycinamide: step 1/2. In terms of biological role, part of the phosphoribosylformylglycinamidine synthase complex involved in the purines biosynthetic pathway. Catalyzes the ATP-dependent conversion of formylglycinamide ribonucleotide (FGAR) and glutamine to yield formylglycinamidine ribonucleotide (FGAM) and glutamate. The FGAM synthase complex is composed of three subunits. PurQ produces an ammonia molecule by converting glutamine to glutamate. PurL transfers the ammonia molecule to FGAR to form FGAM in an ATP-dependent manner. PurS interacts with PurQ and PurL and is thought to assist in the transfer of the ammonia molecule from PurQ to PurL. The polypeptide is Phosphoribosylformylglycinamidine synthase subunit PurL (Methanothrix thermoacetophila (strain DSM 6194 / JCM 14653 / NBRC 101360 / PT) (Methanosaeta thermophila)).